Here is a 109-residue protein sequence, read N- to C-terminus: Gliadoralin-A (109 aa).

An N-terminal signal peptide occupies residues 1–16; sequence MLVILLMVVVLALSSA. A Pyrrolidone carboxylic acid modification is found at Q17. The segment at 17 to 109 is disordered; sequence QDPNRDFVVS…PRYQQPRRAV (93 aa). Positions 35–109 are enriched in low complexity; that stretch reads PSSQQGTVGG…PRYQQPRRAV (75 aa). The propeptide occupies 107 to 109; it reads RAV.

In terms of processing, predominantly proteolytically processed at its C-terminus before secretion to produce the major form gliadoralin A 1-90. Further proteloytically processed after secretion to produce minor forms. Potential substrate of transglutaminase. As to expression, found in saliva (at protein level). Secreted from the submandibular gland.

It localises to the secreted. Functionally, may play a role in the formation of the protective mucosal protein pellicle involved in the reinforcement and protection of oral mucosal epithelial surface. This chain is Gliadoralin-A, found in Rattus norvegicus (Rat).